A 161-amino-acid polypeptide reads, in one-letter code: Pro-corazonin (161 aa).

Positions 1-20 are cleaved as a signal peptide; sequence MMRLLLLPLFLFTLSMACMG. Residue glutamine 21 is modified to Pyrrolidone carboxylic acid. Asparagine amide is present on asparagine 31. Residues 70-161 constitute a propeptide that is removed on maturation; sequence LERCLAQLQR…SGEPSVFGKH (92 aa). Disordered regions lie at residues 93–125 and 142–161; these read NANR…TPIQ and VAGS…FGKH. The span at 102–117 shows a compositional bias: low complexity; sequence SDSGSSRNRANNNNEN.

It belongs to the corazonin family.

The protein resides in the secreted. In terms of biological role, cardioactive peptide. Corazonin is probably involved in the physiological regulation of the heart beat. Clock (Clk) and cycle (cyc) proteins negatively regulate Crz transcription in a cell-specific manner. The sequence is that of Pro-corazonin from Drosophila pseudoobscura pseudoobscura (Fruit fly).